We begin with the raw amino-acid sequence, 501 residues long: Pentatricopeptide repeat-containing protein At4g16470 (501 aa).

PPR repeat units lie at residues 107–141 (EPET…GFAL), 142–172 (NEYL…LKIR), 173–207 (DLIP…RIVP), 208–242 (DQYT…CIKS), 243–273 (NIIV…LSTR), 274–308 (NVIT…GCRP), 309–344 (NPVT…GIEP), and 345–379 (EGQH…EHPP). Residues 380-455 (VWGSLLGACR…DPGYSQIELQ (76 aa)) are type E motif. Residues 456–486 (GEVHRFMKDDTSHRLSEKIYKKVHEMTSFFM) are type E(+) motif.

Belongs to the PPR family. PCMP-E subfamily.

This is Pentatricopeptide repeat-containing protein At4g16470 (PCMP-E12) from Arabidopsis thaliana (Mouse-ear cress).